A 327-amino-acid chain; its full sequence is DNA-directed RNA polymerase subunit alpha (327 aa).

Residues 1-233 (MVREKVKVST…NLFIPFLHVE (233 aa)) form an alpha N-terminal domain (alpha-NTD) region. The alpha C-terminal domain (alpha-CTD) stretch occupies residues 264 to 327 (TKELAFQYIF…KKILDILEKK (64 aa)).

It belongs to the RNA polymerase alpha chain family. As to quaternary structure, in plastids the minimal PEP RNA polymerase catalytic core is composed of four subunits: alpha, beta, beta', and beta''. When a (nuclear-encoded) sigma factor is associated with the core the holoenzyme is formed, which can initiate transcription.

Its subcellular location is the plastid. It is found in the chloroplast. It catalyses the reaction RNA(n) + a ribonucleoside 5'-triphosphate = RNA(n+1) + diphosphate. DNA-dependent RNA polymerase catalyzes the transcription of DNA into RNA using the four ribonucleoside triphosphates as substrates. The polypeptide is DNA-directed RNA polymerase subunit alpha (Capsella bursa-pastoris (Shepherd's purse)).